We begin with the raw amino-acid sequence, 369 residues long: Ubiquinone biosynthesis protein COQ4, mitochondrial (369 aa).

The transit peptide at 1–28 directs the protein to the mitochondrion; the sequence is MTSILGSARPLIQVGPKSRNASTSMSRL. The tract at residues 1 to 70 is disordered; the sequence is MTSILGSARP…NPTNASRHPR (70 aa). 2 stretches are compositionally biased toward polar residues: residues 19–33 and 47–66; these read RNAS…SFPT and YATI…TNAS. His-198, Asp-199, His-202, and Glu-214 together coordinate Zn(2+). Residues 330 to 369 form a disordered region; it reads FSGRAKKGGKRRGWPSKILEHQKAQHQQQQQQQKVDESRN. Basic residues predominate over residues 332–343; it reads GRAKKGGKRRGW.

Belongs to the COQ4 family. Component of a multi-subunit COQ enzyme complex, composed of at least COQ3, COQ4, COQ5, COQ6, COQ7 and COQ9. It depends on Zn(2+) as a cofactor.

It is found in the mitochondrion inner membrane. It carries out the reaction a 4-hydroxy-3-methoxy-5-(all-trans-polyprenyl)benzoate + H(+) = a 2-methoxy-6-(all-trans-polyprenyl)phenol + CO2. Its pathway is cofactor biosynthesis; ubiquinone biosynthesis. Functionally, lyase that catalyzes the C1-decarboxylation of 4-hydroxy-3-methoxy-5-(all-trans-polyprenyl)benzoic acid into 2-methoxy-6-(all-trans-polyprenyl)phenol during ubiquinone biosynthesis. This is Ubiquinone biosynthesis protein COQ4, mitochondrial from Mycosarcoma maydis (Corn smut fungus).